Here is a 168-residue protein sequence, read N- to C-terminus: Short form salivary protein D7R2 (168 aa).

The signal sequence occupies residues 1-21 (MFKKLLLSVGLVWCLISLGQA). Cystine bridges form between Cys30–Cys62, Cys43–Cys168, and Cys101–Cys120. The noradrenaline site is built by Glu31 and Arg46. Serotonin is bound at residue Glu31. The serotonin site is built by His59, Tyr118, Asp135, and Glu138. Residues Tyr118, Asp135, and Glu138 each contribute to the histamine site. Residues Asp135 and Glu138 each coordinate noradrenaline.

It belongs to the PBP/GOBP family. As to expression, female saliva (at protein level). Female salivary gland. Not detected in female carcass without salivary glands. Not detected in male tissues.

It localises to the secreted. Modulates blood feeding of female mosquitoes on vertebrate species by binding and sequestering different mediators involved in the host response. Binds serotonin, noradrenaline, histamine and adrenaline. Inhibits histamine-, serotonin- and noradrenaline-induced smooth muscle contraction. Exhibits vasodilating activity. This is Short form salivary protein D7R2 from Anopheles gambiae (African malaria mosquito).